We begin with the raw amino-acid sequence, 189 residues long: Mu-like prophage FluMu protein gp27 (189 aa).

The protein to phage Mu protein gp27.

This is Mu-like prophage FluMu protein gp27 from Haemophilus influenzae (strain ATCC 51907 / DSM 11121 / KW20 / Rd).